Reading from the N-terminus, the 406-residue chain is Phosphopentomutase (406 aa).

Asp-10, Asp-305, His-310, Asp-346, His-347, and His-358 together coordinate Mn(2+).

Belongs to the phosphopentomutase family. Requires Mn(2+) as cofactor.

It is found in the cytoplasm. The catalysed reaction is 2-deoxy-alpha-D-ribose 1-phosphate = 2-deoxy-D-ribose 5-phosphate. The enzyme catalyses alpha-D-ribose 1-phosphate = D-ribose 5-phosphate. It participates in carbohydrate degradation; 2-deoxy-D-ribose 1-phosphate degradation; D-glyceraldehyde 3-phosphate and acetaldehyde from 2-deoxy-alpha-D-ribose 1-phosphate: step 1/2. In terms of biological role, isomerase that catalyzes the conversion of deoxy-ribose 1-phosphate (dRib-1-P) and ribose 1-phosphate (Rib-1-P) to deoxy-ribose 5-phosphate (dRib-5-P) and ribose 5-phosphate (Rib-5-P), respectively. In Photobacterium profundum (strain SS9), this protein is Phosphopentomutase.